Reading from the N-terminus, the 249-residue chain is DNA polymerase sliding clamp (249 aa).

The protein belongs to the PCNA family. In terms of assembly, homotrimer. The subunits circularize to form a toroid; DNA passes through its center. Replication factor C (RFC) is required to load the toroid on the DNA.

Its function is as follows. Sliding clamp subunit that acts as a moving platform for DNA processing. Responsible for tethering the catalytic subunit of DNA polymerase and other proteins to DNA during high-speed replication. This is DNA polymerase sliding clamp from Methanococcus vannielii (strain ATCC 35089 / DSM 1224 / JCM 13029 / OCM 148 / SB).